We begin with the raw amino-acid sequence, 134 residues long: Ribosome-binding factor A (134 aa).

It belongs to the RbfA family. As to quaternary structure, monomer. Binds 30S ribosomal subunits, but not 50S ribosomal subunits or 70S ribosomes.

It localises to the cytoplasm. One of several proteins that assist in the late maturation steps of the functional core of the 30S ribosomal subunit. Associates with free 30S ribosomal subunits (but not with 30S subunits that are part of 70S ribosomes or polysomes). Required for efficient processing of 16S rRNA. May interact with the 5'-terminal helix region of 16S rRNA. The polypeptide is Ribosome-binding factor A (Cyanothece sp. (strain PCC 7425 / ATCC 29141)).